Consider the following 109-residue polypeptide: Nucleoid-associated protein VC_1055 (109 aa).

The disordered stretch occupies residues 1–22 (MFGKGGMGNLMKQAQQMQERMQ).

The protein belongs to the YbaB/EbfC family. Homodimer.

The protein localises to the cytoplasm. It localises to the nucleoid. In terms of biological role, binds to DNA and alters its conformation. May be involved in regulation of gene expression, nucleoid organization and DNA protection. The chain is Nucleoid-associated protein VC_1055 from Vibrio cholerae serotype O1 (strain ATCC 39315 / El Tor Inaba N16961).